A 365-amino-acid chain; its full sequence is Selina-4(15),7(11)-diene synthase ((2E,6E)-farnesyl diphosphate cyclizing) (365 aa).

2 residues coordinate Mg(2+): Asp-82 and Glu-87. The DDXXXE motif signature appears at 82-87 (DDGHCE). Arg-178 provides a ligand contact to substrate. Mg(2+)-binding residues include Asn-224 and Ser-228. Lys-231 is a binding site for substrate. Glu-232 is a Mg(2+) binding site. 310-311 (RY) lines the substrate pocket.

This sequence belongs to the terpene synthase family. In terms of assembly, monomer. Requires Mg(2+) as cofactor.

It catalyses the reaction (2E,6E)-farnesyl diphosphate = selina-4(15),7(11)-diene + diphosphate. It participates in secondary metabolite biosynthesis; terpenoid biosynthesis. In terms of biological role, catalyzes the conversion of (2E,6E)-farnesyl diphosphate (FPP) to yield the bicyclic sesquiterpene selina-4(15),7(11)-diene via a 1,10-cyclization, which requires the abstraction of the pyrophosphate from FPP leading to a (E,E)-germacradienyl cation. The only accepted substrate is (2E,6E)-farnesyl diphosphate (FPP). This is Selina-4(15),7(11)-diene synthase ((2E,6E)-farnesyl diphosphate cyclizing) from Streptomyces pristinaespiralis (strain ATCC 25486 / DSM 40338 / CBS 914.69 / JCM 4507 / KCC S-0507 / NBRC 13074 / NRRL 2958 / 5647).